The primary structure comprises 73 residues: Large ribosomal subunit protein bL31 (73 aa).

It belongs to the bacterial ribosomal protein bL31 family. Type A subfamily. Part of the 50S ribosomal subunit.

In terms of biological role, binds the 23S rRNA. The sequence is that of Large ribosomal subunit protein bL31 from Bartonella tribocorum (strain CIP 105476 / IBS 506).